We begin with the raw amino-acid sequence, 688 residues long: MFKKLFGQLQRIGKALMLPVAILPAAGILLAFGNAMHNEQLVEIAPWLKNDIIVMISSVMEAAGQVVFDNLPLLFAVGTALGLAGGDGVAALAALVGYLIMNATMGKVLHITIDDIFSYAKGAKELSQAAKEPAHALVLGIPTLQTGVFGGIIMGALAAWCYNKFYNITLPPFLGFFAGKRFVPIVTSVVAIATGVLLSFAWPPIQDGLNSLSNFLLNKNLTLTTFIFGIIERSLIPFGLHHIFYSPFWFEFGSYTNHAGELVRGDQRIWMAQLKDGVPFTAGAFTTGKYPFMMFGLPAAAFAIYKNARPERKKVVGGLMLSAGLTAFLTGITEPLEFSFLFVAPVLYGIHVLLAGTSFLVMHLLGVKIGMTFSGGFIDYILYGLLNWDRSHALLVIPVGIVYAIVYYFLFDFAIRKFKLKTPGREDEETEIRNSSVAKLPFDVLDAMGGKENIKHLDACITRLRVEVVDKSKVDVAGIKALGASGVLEVGNNMQAIFGPKSDQIKHDMAKIMSGEITKPSETTVTEEMSDEPVHVEALGTTDIYAPGIGQIIPLSEVPDQVFAGKMMGDGVGFIPEKGEIVAPFDGTVKTIFPTKHAIGLESESGVEVLIHIGIDTVKLNGEGFESLINVDEKVTQGQPLMKVNLAYLKAHAPSIVTPMIITNLENKELVIEDVQDADPGKLIMTVK.

The region spanning 3 to 427 is the PTS EIIC type-1 domain; it reads KKLFGQLQRI…FKLKTPGRED (425 aa). 10 consecutive transmembrane segments (helical) span residues 12 to 32, 81 to 101, 137 to 157, 182 to 202, 223 to 243, 284 to 304, 315 to 335, 340 to 360, 364 to 384, and 395 to 415; these read IGKA…LLAF, LGLA…YLIM, LVLG…MGAL, FVPI…SFAW, LTTF…LHHI, AFTT…AFAI, VVGG…ITEP, FLFV…TSFL, LLGV…ILYG, and LVIP…DFAI. A PTS EIIB type-1 domain is found at 438–519; that stretch reads AKLPFDVLDA…AKIMSGEITK (82 aa). Cys460 serves as the catalytic Phosphocysteine intermediate; for EIIB activity. Residues 560 to 664 form the PTS EIIA type-1 domain; it reads DQVFAGKMMG…SIVTPMIITN (105 aa). His612 functions as the Tele-phosphohistidine intermediate; for EIIA activity in the catalytic mechanism.

It is found in the cell membrane. Functionally, the phosphoenolpyruvate-dependent sugar phosphotransferase system (sugar PTS), a major carbohydrate active -transport system, catalyzes the phosphorylation of incoming sugar substrates concomitantly with their translocation across the cell membrane. This system is involved in alpha- and beta-glucoside transport. The protein is PTS system glucoside-specific EIICBA component (glcB) of Staphylococcus aureus (strain USA300).